The sequence spans 388 residues: Protein FAM199X (388 aa).

Over residues 288–312 (SMVSSASSSGSSVGNSASNSSANMS) the composition is skewed to low complexity. Residues 288-358 (SMVSSASSSG…QLKEQRQARK (71 aa)) form a disordered region. Ser316 and Ser321 each carry phosphoserine. The segment covering 330 to 349 (DSKKRSKQRKLQQKAFRKRQ) has biased composition (basic residues).

The protein belongs to the FAM199 family.

In Mus musculus (Mouse), this protein is Protein FAM199X (Fam199x).